An 80-amino-acid polypeptide reads, in one-letter code: Metallothionein-like protein type 2, MT2-28 (80 aa).

The protein belongs to the metallothionein superfamily. Type 15 family.

Metallothioneins have a high content of cysteine residues that bind various heavy metals. The polypeptide is Metallothionein-like protein type 2, MT2-28 (Brassica juncea (Indian mustard)).